We begin with the raw amino-acid sequence, 267 residues long: 27 kDa core protein (267 aa).

It belongs to the chordopoxvirinae D3 family.

It is found in the virion. In terms of biological role, late protein which is part of a large complex required for early virion morphogenesis. This complex participates in the formation of virosomes and the incorporation of virosomal contents into nascent immature virions. The chain is 27 kDa core protein from Canarypox virus (CNPV).